The primary structure comprises 188 residues: Large ribosomal subunit protein uL5 (188 aa).

It belongs to the universal ribosomal protein uL5 family. As to quaternary structure, part of the 50S ribosomal subunit; contacts the 5S rRNA and probably tRNA. Forms a bridge to the 30S subunit in the 70S ribosome.

This is one of the proteins that bind and probably mediate the attachment of the 5S RNA into the large ribosomal subunit, where it forms part of the central protuberance. In the 70S ribosome it contacts protein S13 of the 30S subunit (bridge B1b), connecting the 2 subunits; this bridge is implicated in subunit movement. May contact the P site tRNA; the 5S rRNA and some of its associated proteins might help stabilize positioning of ribosome-bound tRNAs. In Pyrococcus abyssi (strain GE5 / Orsay), this protein is Large ribosomal subunit protein uL5.